We begin with the raw amino-acid sequence, 464 residues long: MVLDDLGTSLRSSLDKLQGKSRLSESDVEEIVKEIQRSLLSADVDVSLVMELSDSIKTRALEEEPPGGTTAKDHVLKIVYEEMVELVGDSTELPLENQTILLAGLQGSGKTTSAAKMAWWFSKKGLRPAVIQTDTFRPGAYDQAKQMCERAEVDFYGDPDNDDPVAIAREGLEATADADVHIVDTAGRHALEDDLIAEIEEIERAVDPDRSLLVLDAAIGQGAKEQARQFEKSIGIEGVMITKLDGTAKGGGALTAVNETDSSIAFLGTGETVQDIERFEPSGFISRLLGMGDLKQLSERVERAMAEAQEEDEDWDPEDMLQGEFTLKDMKRQMDAMNRMGPLDQVMDMIPGMGGGMMDQLPDDAMDVTQDRMRRFERIMDSMTDEELEQPRVVGQSRTERIARGSGTDEETVRQLLEQHSMMEQTISQFQGMGEGDMQRMMKKMGGGEGGGLGDMMGGGKGPF.

Residues 104–111, 184–188, and 242–245 each bind GTP; these read GLQGSGKT, DTAGR, and TKLD.

It belongs to the GTP-binding SRP family. SRP54 subfamily. As to quaternary structure, part of the signal recognition particle protein translocation system, which is composed of SRP and FtsY. Archaeal SRP consists of a 7S RNA molecule of 300 nucleotides and two protein subunits: SRP54 and SRP19.

It localises to the cytoplasm. The enzyme catalyses GTP + H2O = GDP + phosphate + H(+). Functionally, involved in targeting and insertion of nascent membrane proteins into the cytoplasmic membrane. Binds to the hydrophobic signal sequence of the ribosome-nascent chain (RNC) as it emerges from the ribosomes. The SRP-RNC complex is then targeted to the cytoplasmic membrane where it interacts with the SRP receptor FtsY. This chain is Signal recognition particle 54 kDa protein, found in Halorubrum lacusprofundi (strain ATCC 49239 / DSM 5036 / JCM 8891 / ACAM 34).